Reading from the N-terminus, the 118-residue chain is Thioredoxin AMT13 (118 aa).

Positions 1-110 constitute a Thioredoxin domain; the sequence is MSDNKAIQTL…LEDAIRANLG (110 aa). An intrachain disulfide couples Cys36 to Cys39.

Belongs to the thioredoxin family.

The protein operates within mycotoxin biosynthesis. Thioredoxin; part of the gene clusters that mediate the biosynthesis of AM-toxins, host-selective toxins (HSTs) causing Alternaria blotch on apple, a worldwide distributed disease. AM-toxins are cyclic depsipeptides containing the 3 residues 2-hydroxy-isovaleric acid (2-HIV), dehydroalanine, L-alanine which are common for all 3 AM-toxins I to III. The fourth precursor is L-alpha-amino-methoxyphenyl-valeric acid (L-Amv) for AM-toxin I, L-alpha-amino-phenyl-valeric acid (L-Apv) for AM-toxin II, and L-alpha-amino-hydroxyphenyl-valeric acid (L-Ahv) for AM-toxin III. AM-toxins have two target sites for affecting susceptible apple cells; they cause invagination of the plasma membrane and electrolyte loss and chloroplast disorganization. The non-ribosomal peptide synthetase AMT1 contains 4 catalytic modules and is responsible for activation of each residue in AM-toxin. The aldo-keto reductase AMT2 catalyzes the conversion of 2-keto-isovaleric acid (2-KIV) to 2-hydroxy-isovaleric acid (2-HIV), one of the precursor residues incorporated by AMT1 during AM-toxin biosynthesis, by reduction of its ketone to an alcohol. The cytochrome P450 monooxygenase AMT3 and the thioesterase AMT4 are also important for AM-toxin production, but their exact function within the AM-toxin biosynthesis are not known yet. Up to 21 proteins (including AMT1 to AMT4) are predicted to be involved in AM-toxin biosynthesis since their expression ishighly up-regulated in AM-toxin-producing cultures. The chain is Thioredoxin AMT13 from Alternaria alternata (Alternaria rot fungus).